A 331-amino-acid chain; its full sequence is L-lactate dehydrogenase A chain (331 aa).

Residues 29–57 and Arg98 contribute to the NAD(+) site; that span reads GMVGMASAISILLKDLCDELAMVDVMEDK. Arg105, Asn137, and Arg168 together coordinate substrate. Residue Asn137 coordinates NAD(+). The active-site Proton acceptor is His192. Thr247 lines the substrate pocket.

This sequence belongs to the LDH/MDH superfamily. LDH family. Homotetramer.

The protein localises to the cytoplasm. The catalysed reaction is (S)-lactate + NAD(+) = pyruvate + NADH + H(+). It functions in the pathway fermentation; pyruvate fermentation to lactate; (S)-lactate from pyruvate: step 1/1. Interconverts simultaneously and stereospecifically pyruvate and lactate with concomitant interconversion of NADH and NAD(+). The polypeptide is L-lactate dehydrogenase A chain (ldha) (Paranotothenia magellanica (Maori cod)).